The primary structure comprises 88 residues: Phosphocarrier protein HPr (88 aa).

The region spanning 1-88 is the HPr domain; that stretch reads MASKEFHIVA…ETMTKEGLAE (88 aa). His15 acts as the Pros-phosphohistidine intermediate in catalysis. Ser46 is modified (phosphoserine; by HPrK/P).

Belongs to the HPr family.

Its subcellular location is the cytoplasm. Phosphorylation on Ser-46 inhibits the phosphoryl transfer from enzyme I to HPr. In terms of biological role, general (non sugar-specific) component of the phosphoenolpyruvate-dependent sugar phosphotransferase system (sugar PTS). This major carbohydrate active-transport system catalyzes the phosphorylation of incoming sugar substrates concomitantly with their translocation across the cell membrane. The phosphoryl group from phosphoenolpyruvate (PEP) is transferred to the phosphoryl carrier protein HPr by enzyme I. Phospho-HPr then transfers it to the PTS EIIA domain. Its function is as follows. P-Ser-HPr interacts with the catabolite control protein A (CcpA), forming a complex that binds to DNA at the catabolite response elements cre, operator sites preceding a large number of catabolite-regulated genes. Thus, P-Ser-HPr is a corepressor in carbon catabolite repression (CCR), a mechanism that allows bacteria to coordinate and optimize the utilization of available carbon sources. P-Ser-HPr also plays a role in inducer exclusion, in which it probably interacts with several non-PTS permeases and inhibits their transport activity. This Lactococcus lactis subsp. cremoris (Streptococcus cremoris) protein is Phosphocarrier protein HPr (ptsH).